The primary structure comprises 528 residues: Serine/threonine-protein kinase akt-2 (528 aa).

Positions 12–115 constitute a PH domain; that stretch reads DIVIESWLHK…WIEAIQAVSS (104 aa). The interval 121-153 is disordered; sequence ENAGNTSMQEEDTNGNPSGESDVNMDATSTRSD. The segment covering 123–153 has biased composition (polar residues); it reads AGNTSMQEEDTNGNPSGESDVNMDATSTRSD. The Protein kinase domain maps to 180–437; the sequence is FDFLKVLGQG…AREVSRAEFF (258 aa). ATP-binding positions include 186–194 and Lys-209; that span reads LGQGTFGKV. Asp-303 functions as the Proton acceptor in the catalytic mechanism. The AGC-kinase C-terminal domain maps to 438–515; the sequence is KDVDWEATLR…YYVSGSLERS (78 aa).

This sequence belongs to the protein kinase superfamily. AGC Ser/Thr protein kinase family. RAC subfamily. As to quaternary structure, interacts with pdk-1, sgk-1, akt-1 and daf-16. Part of a complex containing sgk-1, akt-1 and akt-2. Mg(2+) serves as cofactor. As to expression, expressed in neurons, muscle cells of the pharynx, rectal gland cells, and spermatheca.

The catalysed reaction is L-seryl-[protein] + ATP = O-phospho-L-seryl-[protein] + ADP + H(+). It carries out the reaction L-threonyl-[protein] + ATP = O-phospho-L-threonyl-[protein] + ADP + H(+). Its activity is regulated as follows. Phosphorylated and activated by pdk-1. Functionally, acts downstream of PI3 kinase age-1 and kinase pdk-1 in the daf-2/insulin receptor-like transduction pathway. Essential role in regulating developmental arrest at the dauer stage. Phosphorylates Forkhead-related daf-16 and the longevity-promoting skn-1 transcription factors, which inhibits their entry into the nucleus and antagonizes their functions. Role in immune function and pathogen resistance. Downstream of age-1 and together with akt-1 and sgk-1, promotes cell survival during embryonic development. Plays a role in maintaining the gonadal basement membrane through antagonizing akt-1 activity. The protein is Serine/threonine-protein kinase akt-2 of Caenorhabditis elegans.